The following is a 179-amino-acid chain: Large ribosomal subunit protein uL5 (179 aa).

It belongs to the universal ribosomal protein uL5 family. Part of the 50S ribosomal subunit; part of the 5S rRNA/L5/L18/L25 subcomplex. Contacts the 5S rRNA and the P site tRNA. Forms a bridge to the 30S subunit in the 70S ribosome.

Its function is as follows. This is one of the proteins that bind and probably mediate the attachment of the 5S RNA into the large ribosomal subunit, where it forms part of the central protuberance. In the 70S ribosome it contacts protein S13 of the 30S subunit (bridge B1b), connecting the 2 subunits; this bridge is implicated in subunit movement. Contacts the P site tRNA; the 5S rRNA and some of its associated proteins might help stabilize positioning of ribosome-bound tRNAs. The polypeptide is Large ribosomal subunit protein uL5 (Burkholderia vietnamiensis (strain G4 / LMG 22486) (Burkholderia cepacia (strain R1808))).